A 519-amino-acid polypeptide reads, in one-letter code: Glucoamylase GLA1 (519 aa).

Residues 1–27 (MRFGVLISVFVAIVSALPLQEGPLNKR) form the signal peptide. 2 N-linked (GlcNAc...) asparagine glycosylation sites follow: Asn115 and Asn127. A substrate-binding site is contributed by Trp166. Asn205 is a glycosylation site (N-linked (GlcNAc...) asparagine). Asp234 (proton acceptor) is an active-site residue. Glu237 acts as the Proton donor in catalysis.

The protein belongs to the glycosyl hydrolase 15 family.

The catalysed reaction is Hydrolysis of terminal (1-&gt;4)-linked alpha-D-glucose residues successively from non-reducing ends of the chains with release of beta-D-glucose.. This Saccharomycopsis fibuligera (Yeast) protein is Glucoamylase GLA1 (GLA1).